A 436-amino-acid chain; its full sequence is Methylenetetrahydrofolate--tRNA-(uracil-5-)-methyltransferase TrmFO (436 aa).

10–15 (GAGLAG) lines the FAD pocket.

The protein belongs to the MnmG family. TrmFO subfamily. FAD serves as cofactor.

It is found in the cytoplasm. It carries out the reaction uridine(54) in tRNA + (6R)-5,10-methylene-5,6,7,8-tetrahydrofolate + NADH + H(+) = 5-methyluridine(54) in tRNA + (6S)-5,6,7,8-tetrahydrofolate + NAD(+). It catalyses the reaction uridine(54) in tRNA + (6R)-5,10-methylene-5,6,7,8-tetrahydrofolate + NADPH + H(+) = 5-methyluridine(54) in tRNA + (6S)-5,6,7,8-tetrahydrofolate + NADP(+). Its function is as follows. Catalyzes the folate-dependent formation of 5-methyl-uridine at position 54 (M-5-U54) in all tRNAs. This is Methylenetetrahydrofolate--tRNA-(uracil-5-)-methyltransferase TrmFO from Staphylococcus carnosus (strain TM300).